Here is a 176-residue protein sequence, read N- to C-terminus: Crossover junction endodeoxyribonuclease RuvC (176 aa).

Residues aspartate 7, glutamate 68, and aspartate 141 contribute to the active site. Residues aspartate 7, glutamate 68, and aspartate 141 each contribute to the Mg(2+) site.

This sequence belongs to the RuvC family. Homodimer which binds Holliday junction (HJ) DNA. The HJ becomes 2-fold symmetrical on binding to RuvC with unstacked arms; it has a different conformation from HJ DNA in complex with RuvA. In the full resolvosome a probable DNA-RuvA(4)-RuvB(12)-RuvC(2) complex forms which resolves the HJ. Requires Mg(2+) as cofactor.

The protein resides in the cytoplasm. The enzyme catalyses Endonucleolytic cleavage at a junction such as a reciprocal single-stranded crossover between two homologous DNA duplexes (Holliday junction).. Its function is as follows. The RuvA-RuvB-RuvC complex processes Holliday junction (HJ) DNA during genetic recombination and DNA repair. Endonuclease that resolves HJ intermediates. Cleaves cruciform DNA by making single-stranded nicks across the HJ at symmetrical positions within the homologous arms, yielding a 5'-phosphate and a 3'-hydroxyl group; requires a central core of homology in the junction. The consensus cleavage sequence is 5'-(A/T)TT(C/G)-3'. Cleavage occurs on the 3'-side of the TT dinucleotide at the point of strand exchange. HJ branch migration catalyzed by RuvA-RuvB allows RuvC to scan DNA until it finds its consensus sequence, where it cleaves and resolves the cruciform DNA. The protein is Crossover junction endodeoxyribonuclease RuvC of Streptomyces avermitilis (strain ATCC 31267 / DSM 46492 / JCM 5070 / NBRC 14893 / NCIMB 12804 / NRRL 8165 / MA-4680).